The sequence spans 140 residues: Nucleoside diphosphate kinase (140 aa).

ATP contacts are provided by Lys-11, Phe-59, Arg-87, Thr-93, Arg-104, and Asn-114. His-117 functions as the Pros-phosphohistidine intermediate in the catalytic mechanism.

It belongs to the NDK family. In terms of assembly, homotetramer. Mg(2+) is required as a cofactor.

The protein localises to the cytoplasm. It carries out the reaction a 2'-deoxyribonucleoside 5'-diphosphate + ATP = a 2'-deoxyribonucleoside 5'-triphosphate + ADP. The catalysed reaction is a ribonucleoside 5'-diphosphate + ATP = a ribonucleoside 5'-triphosphate + ADP. In terms of biological role, major role in the synthesis of nucleoside triphosphates other than ATP. The ATP gamma phosphate is transferred to the NDP beta phosphate via a ping-pong mechanism, using a phosphorylated active-site intermediate. The chain is Nucleoside diphosphate kinase from Francisella tularensis subsp. holarctica (strain LVS).